The primary structure comprises 188 residues: dCTP deaminase (188 aa).

Residues 111-116, 135-137, Q156, Y170, and Q180 each bind dCTP; these read KSTYAR and TLE. Catalysis depends on E137, which acts as the Proton donor/acceptor.

It belongs to the dCTP deaminase family. Homotrimer.

It carries out the reaction dCTP + H2O + H(+) = dUTP + NH4(+). It participates in pyrimidine metabolism; dUMP biosynthesis; dUMP from dCTP (dUTP route): step 1/2. In terms of biological role, catalyzes the deamination of dCTP to dUTP. This Cupriavidus metallidurans (strain ATCC 43123 / DSM 2839 / NBRC 102507 / CH34) (Ralstonia metallidurans) protein is dCTP deaminase.